Reading from the N-terminus, the 264-residue chain is uncharacterized protein (264 aa).

A disordered region spans residues 235-264 (ESSDEEDNDDDIINNDTNNDINNDDIEIKT). Acidic residues predominate over residues 237 to 247 (SDEEDNDDDII).

This is an uncharacterized protein from Acanthamoeba polyphaga mimivirus (APMV).